The following is a 652-amino-acid chain: DNA polymerase epsilon subunit B (652 aa).

Belongs to the DNA polymerase epsilon subunit B family. In terms of assembly, heterotetramer. Consists of four subunits: POL2, DPB2, DPB3 and DPB4.

The protein resides in the nucleus. As accessory component of the DNA polymerase epsilon (DNA polymerase II) participates in chromosomal DNA replication. The sequence is that of DNA polymerase epsilon subunit B (DPB2) from Yarrowia lipolytica (strain CLIB 122 / E 150) (Yeast).